Reading from the N-terminus, the 299-residue chain is Mitochondrial magnesium exporter 1 (299 aa).

Solcar repeat units follow at residues 12 to 103 (SNPV…GKRL), 112 to 200 (LTYP…LQEL), and 210 to 296 (ISTT…TNDL). Helical transmembrane passes span 79-99 (ISAPLVGVTPIYAVDFAVYAA), 114-134 (YPQIFAAGALAGVCSALVTVP), 216-236 (ILSGGTAGIVFWTLAVPFDVL), and 272-292 (ILPILLRAFPSTAAVFFGVEL).

This sequence belongs to the mitochondrial carrier (TC 2.A.29) family.

The protein localises to the mitochondrion membrane. Functionally, mediates efflux of magnesium ions from mitochondria, suggesting a role in magnesium homeostasis. This Drosophila melanogaster (Fruit fly) protein is Mitochondrial magnesium exporter 1.